The following is a 417-amino-acid chain: Serine hydroxymethyltransferase 2 (417 aa).

(6S)-5,6,7,8-tetrahydrofolate contacts are provided by residues leucine 121 and glycine 125 to leucine 127. Lysine 230 is modified (N6-(pyridoxal phosphate)lysine). Residue serine 355–phenylalanine 357 coordinates (6S)-5,6,7,8-tetrahydrofolate.

The protein belongs to the SHMT family. Homodimer. Requires pyridoxal 5'-phosphate as cofactor.

The protein resides in the cytoplasm. It catalyses the reaction (6R)-5,10-methylene-5,6,7,8-tetrahydrofolate + glycine + H2O = (6S)-5,6,7,8-tetrahydrofolate + L-serine. The protein operates within one-carbon metabolism; tetrahydrofolate interconversion. It functions in the pathway amino-acid biosynthesis; glycine biosynthesis; glycine from L-serine: step 1/1. Functionally, catalyzes the reversible interconversion of serine and glycine with tetrahydrofolate (THF) serving as the one-carbon carrier. This reaction serves as the major source of one-carbon groups required for the biosynthesis of purines, thymidylate, methionine, and other important biomolecules. Also exhibits THF-independent aldolase activity toward beta-hydroxyamino acids, producing glycine and aldehydes, via a retro-aldol mechanism. The chain is Serine hydroxymethyltransferase 2 from Pseudomonas savastanoi pv. phaseolicola (strain 1448A / Race 6) (Pseudomonas syringae pv. phaseolicola (strain 1448A / Race 6)).